The following is a 452-amino-acid chain: tRNA modification GTPase MnmE (452 aa).

Arginine 23, glutamate 81, and lysine 120 together coordinate (6S)-5-formyl-5,6,7,8-tetrahydrofolate. Positions 217–373 constitute a TrmE-type G domain; sequence GIKTAIIGQT…LVLRINQMYL (157 aa). Residue asparagine 227 participates in K(+) binding. GTP is bound by residues 227-232, 246-252, and 271-274; these read NVGKSS, TDIPGTT, and DTAG. Residue serine 231 participates in Mg(2+) binding. 3 residues coordinate K(+): threonine 246, isoleucine 248, and threonine 251. A Mg(2+)-binding site is contributed by threonine 252. Lysine 452 is a (6S)-5-formyl-5,6,7,8-tetrahydrofolate binding site.

Belongs to the TRAFAC class TrmE-Era-EngA-EngB-Septin-like GTPase superfamily. TrmE GTPase family. Homodimer. Heterotetramer of two MnmE and two MnmG subunits. K(+) is required as a cofactor.

It localises to the cytoplasm. In terms of biological role, exhibits a very high intrinsic GTPase hydrolysis rate. Involved in the addition of a carboxymethylaminomethyl (cmnm) group at the wobble position (U34) of certain tRNAs, forming tRNA-cmnm(5)s(2)U34. In Mycoplasma mycoides subsp. mycoides SC (strain CCUG 32753 / NCTC 10114 / PG1), this protein is tRNA modification GTPase MnmE.